A 1377-amino-acid chain; its full sequence is DNA-directed RNA polymerase subunit beta'' (1377 aa).

Zn(2+) contacts are provided by Cys220, Cys291, Cys298, and Cys301.

It belongs to the RNA polymerase beta' chain family. RpoC2 subfamily. In plastids the minimal PEP RNA polymerase catalytic core is composed of four subunits: alpha, beta, beta', and beta''. When a (nuclear-encoded) sigma factor is associated with the core the holoenzyme is formed, which can initiate transcription. It depends on Zn(2+) as a cofactor.

It localises to the plastid. The protein localises to the chloroplast. The enzyme catalyses RNA(n) + a ribonucleoside 5'-triphosphate = RNA(n+1) + diphosphate. Functionally, DNA-dependent RNA polymerase catalyzes the transcription of DNA into RNA using the four ribonucleoside triphosphates as substrates. The polypeptide is DNA-directed RNA polymerase subunit beta'' (Nandina domestica (Heavenly bamboo)).